A 131-amino-acid chain; its full sequence is Small ribosomal subunit protein uS8 (131 aa).

It belongs to the universal ribosomal protein uS8 family. Part of the 30S ribosomal subunit. Contacts proteins S5 and S12.

One of the primary rRNA binding proteins, it binds directly to 16S rRNA central domain where it helps coordinate assembly of the platform of the 30S subunit. This is Small ribosomal subunit protein uS8 from Porphyromonas gingivalis (strain ATCC 33277 / DSM 20709 / CIP 103683 / JCM 12257 / NCTC 11834 / 2561).